A 311-amino-acid chain; its full sequence is MPKTLIFGHKNPDTDTICSAIAYADLKGQLGVETEAVRLGEPNGETLYALEAFGVSTPRLIEKAANETDRVILVDHNERQQSVSDIDDVQVVEVIDHHRIANFETADPVYYRAEPVGCTATIIKKLYKEHGLDIPKPIAGLMLSAIISDSLLFKSPTCTEEDRQAAKELAEIAGVNAEEYGLNMLKAGADISDKTAGELLTMDAKAFAMGAATVEIAQVNTVDINDVLARQSELEKVITAKINDNGLDLFVFIITDILENDSVALVLGDKTAAFEQAFQTTLTNHTAVLKGVVSRKKQVVPPLTEAIANVN.

6 residues coordinate Mn(2+): H9, D13, D15, D75, H97, and D149.

Belongs to the PPase class C family. Mn(2+) is required as a cofactor.

The protein resides in the cytoplasm. It catalyses the reaction diphosphate + H2O = 2 phosphate + H(+). This is Probable manganese-dependent inorganic pyrophosphatase from Shouchella clausii (strain KSM-K16) (Alkalihalobacillus clausii).